Here is a 259-residue protein sequence, read N- to C-terminus: Pimeloyl-[acyl-carrier protein] methyl ester esterase (259 aa).

The AB hydrolase-1 domain occupies His15–Pro242. Residues Trp22, Ser82–Leu83, and Phe143–Gln147 each bind substrate. Residue Ser82 is the Nucleophile of the active site. Active-site residues include Asp207 and His235. His235 contacts substrate.

This sequence belongs to the AB hydrolase superfamily. Carboxylesterase BioH family. As to quaternary structure, monomer.

It localises to the cytoplasm. The catalysed reaction is 6-carboxyhexanoyl-[ACP] methyl ester + H2O = 6-carboxyhexanoyl-[ACP] + methanol + H(+). It functions in the pathway cofactor biosynthesis; biotin biosynthesis. Functionally, the physiological role of BioH is to remove the methyl group introduced by BioC when the pimeloyl moiety is complete. It allows to synthesize pimeloyl-ACP via the fatty acid synthetic pathway through the hydrolysis of the ester bonds of pimeloyl-ACP esters. The chain is Pimeloyl-[acyl-carrier protein] methyl ester esterase from Cronobacter sakazakii (strain ATCC BAA-894) (Enterobacter sakazakii).